Consider the following 105-residue polypeptide: MYWPCLVITPFTVGESFCLLLSLGIPLDTGILNIWSLSSISRHLEKLSIMLGNCGLTISSMSQEHSFTASLKLSYLSSAPNLSFGNKSTLILLFEHFHCVLDQIL.

An N-terminal signal peptide occupies residues 1-24; sequence MYWPCLVITPFTVGESFCLLLSLG.

This is an uncharacterized protein from Saccharomyces cerevisiae (strain ATCC 204508 / S288c) (Baker's yeast).